Consider the following 126-residue polypeptide: Large ribosomal subunit protein bL12 (126 aa).

The protein belongs to the bacterial ribosomal protein bL12 family. In terms of assembly, homodimer. Part of the ribosomal stalk of the 50S ribosomal subunit. Forms a multimeric L10(L12)X complex, where L10 forms an elongated spine to which 2 to 4 L12 dimers bind in a sequential fashion. Binds GTP-bound translation factors.

In terms of biological role, forms part of the ribosomal stalk which helps the ribosome interact with GTP-bound translation factors. Is thus essential for accurate translation. The polypeptide is Large ribosomal subunit protein bL12 (Methylobacterium nodulans (strain LMG 21967 / CNCM I-2342 / ORS 2060)).